A 361-amino-acid polypeptide reads, in one-letter code: Anhydro-N-acetylmuramic acid kinase (361 aa).

10 to 17 is an ATP binding site; it reads GTSLDGVD.

The protein belongs to the anhydro-N-acetylmuramic acid kinase family.

It carries out the reaction 1,6-anhydro-N-acetyl-beta-muramate + ATP + H2O = N-acetyl-D-muramate 6-phosphate + ADP + H(+). It functions in the pathway amino-sugar metabolism; 1,6-anhydro-N-acetylmuramate degradation. The protein operates within cell wall biogenesis; peptidoglycan recycling. Catalyzes the specific phosphorylation of 1,6-anhydro-N-acetylmuramic acid (anhMurNAc) with the simultaneous cleavage of the 1,6-anhydro ring, generating MurNAc-6-P. Is required for the utilization of anhMurNAc either imported from the medium or derived from its own cell wall murein, and thus plays a role in cell wall recycling. The sequence is that of Anhydro-N-acetylmuramic acid kinase from Gluconobacter oxydans (strain 621H) (Gluconobacter suboxydans).